Here is a 677-residue protein sequence, read N- to C-terminus: WD repeat-containing protein 48 (677 aa).

Tyr28 carries the phosphotyrosine modification. WD repeat units lie at residues 28–67 (YNRN…QDPY), 73–112 (HHTD…CMST), 115–154 (THKD…ALTA), 166–205 (GNKD…KLMK), 208–247 (GHTD…CIAT), 250–289 (VHDE…IRVL), 292–334 (EEKA…NFRA), and 358–397 (KGGA…KVED). An N6-acetyllysine modification is found at Lys214. Lys578 carries the N6-acetyllysine modification. The disordered stretch occupies residues 607–628 (LDNESQTTSSSNNEKPGEQEKE). The segment covering 609-620 (NESQTTSSSNNE) has biased composition (low complexity). Position 613 is a phosphothreonine (Thr613).

The protein belongs to the WD repeat WDR48 family. Interacts with USP46. Interacts with USP1. Interacts with USP12. Component of the USP12-WDR20-WDR48 deubiquitinating complex. Component of the USP12-DMWD-WDR48 deubiquitinating complex. Interacts with PHLPP1. Interacts with RAD51AP1; the interaction is direct and promotes formation of a trimeric complex with RAD51 via RAD51AP1. Interacts with ATAD5; the interaction regulates USP1-mediated PCNA deubiquitination. Interacts with RAD51; the interaction is enhanced under replication stress. Interacts with ITCH; the interaction is more efficient when both USP12 and WDR48/UAF1 are involved and may facilitate recruitment of the USP12 deubiquitinating complex to Notch. In terms of assembly, (Microbial infection) Interacts with papillomavirus HPV11 E1 protein. As to quaternary structure, (Microbial infection) Interacts with Saimiriine herpesvirus TIP protein. (Microbial infection) Interacts with human cytomegalovirus protein UL138. In terms of assembly, (Microbial infection) Interacts with Epstein-Barr virus protein EBNA3. In terms of tissue distribution, ubiquitous.

The protein resides in the nucleus. It localises to the cytoplasm. The protein localises to the lysosome. Its subcellular location is the late endosome. Regulator of deubiquitinating complexes, which acts as a strong activator of USP1, USP12 and USP46. Enhances the USP1-mediated deubiquitination of FANCD2; USP1 being almost inactive by itself. Activates deubiquitination by increasing the catalytic turnover without increasing the affinity of deubiquitinating enzymes for the substrate. Also activates deubiquitinating activity of complexes containing USP12. In complex with USP12, acts as a potential tumor suppressor by positively regulating PHLPP1 stability. Docks at the distal end of the USP12 fingers domain and induces a cascade of structural changes leading to the activation of the enzyme. Together with RAD51AP1, promotes DNA repair by stimulating RAD51-mediated homologous recombination. Binds single-stranded DNA (ssDNA) and double-stranded DNA (dsDNA). DNA-binding is required both for USP1-mediated deubiquitination of FANCD2 and stimulation of RAD51-mediated homologous recombination: both WDR48/UAF1 and RAD51AP1 have coordinated role in DNA-binding during these processes. Together with ATAD5 and by regulating USP1 activity, has a role in PCNA-mediated translesion synthesis (TLS) by deubiquitinating monoubiquitinated PCNA. Together with ATAD5, has a role in recruiting RAD51 to stalled forks during replication stress. In terms of biological role, (Microbial infection) In case of infection by Herpesvirus saimiri, may play a role in vesicular transport or membrane fusion events necessary for transport to lysosomes. Induces lysosomal vesicle formation via interaction with Herpesvirus saimiri tyrosine kinase-interacting protein (TIP). Subsequently, TIP recruits tyrosine-protein kinase LCK, resulting in down-regulation of T-cell antigen receptor TCR. May play a role in generation of enlarged endosomal vesicles via interaction with TIP. In case of infection by papillomavirus HPV11, promotes the maintenance of the viral genome via its interaction with HPV11 helicase E1. This chain is WD repeat-containing protein 48, found in Homo sapiens (Human).